We begin with the raw amino-acid sequence, 250 residues long: Protein lin-28 homolog B (250 aa).

2 disordered regions span residues 1 to 27 (MAEAGASKGGEEPGRLPEHEEEEESPL) and 98 to 126 (RVTGPGGSPCLGSERRPKGKTVQKRKPKG). Residues 9-18 (GGEEPGRLPE) are compositionally biased toward basic and acidic residues. One can recognise a CSD domain in the interval 29–102 (HGAGHCKWFN…GLESIRVTGP (74 aa)). The span at 114-125 (PKGKTVQKRKPK) shows a compositional bias: basic residues. 2 consecutive CCHC-type zinc fingers follow at residues 127 to 144 (DRCYNCGGLDHHAKECSL) and 149 to 166 (KKCHYCQSIMHMVANCPH). Zn(2+) contacts are provided by C129, C132, H137, C142, C151, C154, H159, and C164. The disordered stretch occupies residues 165-250 (PHKTVSQQPT…GPSVQKRKKT (86 aa)). Polar residues predominate over residues 168-177 (TVSQQPTSSQ). A compositionally biased stretch (low complexity) spans 200-209 (GYSSPSYSQE). Positions 210 to 219 (GRSEISERSG) are enriched in basic and acidic residues.

This sequence belongs to the lin-28 family.

It is found in the nucleus. Its subcellular location is the nucleolus. Functionally, suppressor of specific microRNA (miRNA) biogenesis. Binds target primary miRNA transcripts and sequester them in the nucleolus, away from the microprocessor complex, hence preventing their processing into mature miRNA. The specific interaction with target pri-miRNAs occurs via an 5'-GGAG-3' motif in the pre-miRNA terminal loop. In Gallus gallus (Chicken), this protein is Protein lin-28 homolog B (LIN28B).